A 307-amino-acid chain; its full sequence is Homoserine kinase (307 aa).

95-105 (PQSRGLGSSAS) contacts ATP.

Belongs to the GHMP kinase family. Homoserine kinase subfamily.

The protein localises to the cytoplasm. The enzyme catalyses L-homoserine + ATP = O-phospho-L-homoserine + ADP + H(+). It functions in the pathway amino-acid biosynthesis; L-threonine biosynthesis; L-threonine from L-aspartate: step 4/5. Functionally, catalyzes the ATP-dependent phosphorylation of L-homoserine to L-homoserine phosphate. This is Homoserine kinase from Corynebacterium aurimucosum (strain ATCC 700975 / DSM 44827 / CIP 107346 / CN-1) (Corynebacterium nigricans).